Reading from the N-terminus, the 321-residue chain is Lipoyl synthase (321 aa).

Residues Cys68, Cys73, Cys79, Cys94, Cys98, Cys101, and Ser308 each coordinate [4Fe-4S] cluster. In terms of domain architecture, Radical SAM core spans 80-297 (FNHGTATFMI…KEIALELGFT (218 aa)).

This sequence belongs to the radical SAM superfamily. Lipoyl synthase family. [4Fe-4S] cluster serves as cofactor.

The protein resides in the cytoplasm. It catalyses the reaction [[Fe-S] cluster scaffold protein carrying a second [4Fe-4S](2+) cluster] + N(6)-octanoyl-L-lysyl-[protein] + 2 oxidized [2Fe-2S]-[ferredoxin] + 2 S-adenosyl-L-methionine + 4 H(+) = [[Fe-S] cluster scaffold protein] + N(6)-[(R)-dihydrolipoyl]-L-lysyl-[protein] + 4 Fe(3+) + 2 hydrogen sulfide + 2 5'-deoxyadenosine + 2 L-methionine + 2 reduced [2Fe-2S]-[ferredoxin]. The protein operates within protein modification; protein lipoylation via endogenous pathway; protein N(6)-(lipoyl)lysine from octanoyl-[acyl-carrier-protein]: step 2/2. Functionally, catalyzes the radical-mediated insertion of two sulfur atoms into the C-6 and C-8 positions of the octanoyl moiety bound to the lipoyl domains of lipoate-dependent enzymes, thereby converting the octanoylated domains into lipoylated derivatives. The sequence is that of Lipoyl synthase from Aliivibrio fischeri (strain ATCC 700601 / ES114) (Vibrio fischeri).